We begin with the raw amino-acid sequence, 182 residues long: Inner membrane-spanning protein YciB (182 aa).

Transmembrane regions (helical) follow at residues 20-42, 55-75, 76-96, 123-143, and 153-173; these read GGIY…WVYY, LIMI…TFIL, LKPT…AQFF, LNLA…YIAF, and FKLF…GFWM.

This sequence belongs to the YciB family.

Its subcellular location is the cell inner membrane. Plays a role in cell envelope biogenesis, maintenance of cell envelope integrity and membrane homeostasis. The polypeptide is Inner membrane-spanning protein YciB (Polynucleobacter asymbioticus (strain DSM 18221 / CIP 109841 / QLW-P1DMWA-1) (Polynucleobacter necessarius subsp. asymbioticus)).